The following is a 443-amino-acid chain: MMIMTTRTFFSWFIVICAFWLTSFSSVPVHAQLKGTISTADFNPIPIAVTDFFSNDSIGLKIAAVVAADLERSGLFLPLDKASFLEKISNPNRQPHFPYWQEIKAQGLVIGQVIRENDGRLRVDFRLWDVFGQRQLKGRRFYTATERWRRVAHMIADEIYSEMTGESGYFDTRIVFIDETGPQNARIKRLAIMDQDGANLIYISDGSELVLTPRFSPKRQEITYMAYEHNQVPHVYLQQIEMGQRELIGTFNNMTIAPRFSSDGQKVIMSLLQNDGSANLYTMDLRTRMMTRLTTTSAIDTSASYSPDGTKIVFSSDRSGKPQIYTMNADGSNLQRISSNEGSYSTPIWSPRGDYIAFTKQLEGQFSIGVMHPDGQGERILTTGFHNEGPTWAPNGRVLMFFRKNPGMGPKIYTIDITGRNERQLPTPNDASDPAWSPLLNIQ.

Residues Met-1 to Ala-31 form the signal peptide. Residues Glu-422–Gln-443 form a disordered region.

This sequence belongs to the TolB family. As to quaternary structure, the Tol-Pal system is composed of five core proteins: the inner membrane proteins TolA, TolQ and TolR, the periplasmic protein TolB and the outer membrane protein Pal. They form a network linking the inner and outer membranes and the peptidoglycan layer.

Its subcellular location is the periplasm. In terms of biological role, part of the Tol-Pal system, which plays a role in outer membrane invagination during cell division and is important for maintaining outer membrane integrity. In Bartonella henselae (strain ATCC 49882 / DSM 28221 / CCUG 30454 / Houston 1) (Rochalimaea henselae), this protein is Tol-Pal system protein TolB.